The following is a 462-amino-acid chain: Stabilizer of axonemal microtubules 1 (462 aa).

Mn regions lie at residues 30-64, 65-97, 98-131, 132-165, 166-199, 200-232, 233-266, 267-299, 300-332, 333-366, 367-400, and 401-434; these read KPCF…KVNI, PMEG…PIQD, EMDF…QCND, KMEC…PASC, RFDH…LCNI, PLES…PSEV, PFDS…GLDI, PFPS…PPEG, KMDL…KKSD, RFES…FSDE, PMEY…RVNI, and PLEG…IFDE.

Belongs to the FAM154 family. Associates with microtubules via the Mn regions.

The protein localises to the cytoplasm. It localises to the cytoskeleton. The protein resides in the microtubule organizing center. Its subcellular location is the centrosome. It is found in the centriole. The protein localises to the cilium basal body. It localises to the cilium axoneme. In terms of biological role, may play a role in the regulation of cilium length. Stabilizes microtubules at low temperature. The polypeptide is Stabilizer of axonemal microtubules 1 (Saxo1) (Rattus norvegicus (Rat)).